We begin with the raw amino-acid sequence, 347 residues long: NADH-ubiquinone oxidoreductase chain 2 (347 aa).

Helical transmembrane passes span 13–33, 55–75, 96–116, 123–143, 150–170, 178–198, 201–221, 247–267, 277–297, and 325–345; these read IFAGTLITALSSHWFFAWVGL, AAIKYFLTQATASMILLMAIL, LMIVVAMAMKLGMAPFHFWVP, PLMSGLLLLTWQKLAPMSIMY, NVSLLLTLSILSILAGSWGGL, ILAYSSITHVGWMMAVLPYNP, TILNLTIYIILTTTTFLLLNL, TLLSLGGLPPLTGFLPKWLII, ITPTIMAIITLLNLYFYLRLI, and FLPTLITLTTLLLPISPFMLM.

Belongs to the complex I subunit 2 family. As to quaternary structure, core subunit of respiratory chain NADH dehydrogenase (Complex I) which is composed of 45 different subunits. Interacts with TMEM242.

It is found in the mitochondrion inner membrane. It carries out the reaction a ubiquinone + NADH + 5 H(+)(in) = a ubiquinol + NAD(+) + 4 H(+)(out). Functionally, core subunit of the mitochondrial membrane respiratory chain NADH dehydrogenase (Complex I) which catalyzes electron transfer from NADH through the respiratory chain, using ubiquinone as an electron acceptor. Essential for the catalytic activity and assembly of complex I. The protein is NADH-ubiquinone oxidoreductase chain 2 of Gorilla gorilla gorilla (Western lowland gorilla).